Here is a 407-residue protein sequence, read N- to C-terminus: MSESAFSNRIVQSLLDTDFYKLTMMQAVLHNYPNVDVEWEFRCRNGEDLRPYLGEIQHQIELLCELSLSPEHLVFLERITFMKPDFLRFLGLFRFNTRYVKTSIENDELCIRLHGPWLHVILFEVPLLAIVSEVRNRHRYPDTLLSQARDRLYDKFEWLTVNATPDELAELKVADFGTRRRFSYRVQEEVLNVLKLDFPGQLVGTSNVHLARQLDLKPLGTMAHEWIMAHQQLGPRLIDSQIAALDCWVREYRGLLGIALTDCITTDAFLNDFDLYFAKLFDGLRHDSGDPVKWAEKCISHYQKLGIDPMSKTLVFSDGLNLPKALDIFRALRGRINVSFGIGTNLTADIPGIAPMNMVLKMTACAGQAVAKISDESGKTQCKDPNFVAYLRHVFKVPDLPSPAKPA.

H224 bears the Phosphohistidine; by autocatalysis mark.

It belongs to the NAPRTase family. In terms of processing, transiently phosphorylated on a His residue during the reaction cycle. Phosphorylation strongly increases the affinity for substrates and increases the rate of nicotinate D-ribonucleotide production. Dephosphorylation regenerates the low-affinity form of the enzyme, leading to product release.

It carries out the reaction nicotinate + 5-phospho-alpha-D-ribose 1-diphosphate + ATP + H2O = nicotinate beta-D-ribonucleotide + ADP + phosphate + diphosphate. It functions in the pathway cofactor biosynthesis; NAD(+) biosynthesis; nicotinate D-ribonucleotide from nicotinate: step 1/1. Catalyzes the synthesis of beta-nicotinate D-ribonucleotide from nicotinate and 5-phospho-D-ribose 1-phosphate at the expense of ATP. This is Nicotinate phosphoribosyltransferase from Pseudomonas syringae pv. tomato (strain ATCC BAA-871 / DC3000).